A 180-amino-acid polypeptide reads, in one-letter code: Large ribosomal subunit protein uL6 (180 aa).

Belongs to the universal ribosomal protein uL6 family. As to quaternary structure, part of the 50S ribosomal subunit.

Its function is as follows. This protein binds to the 23S rRNA, and is important in its secondary structure. It is located near the subunit interface in the base of the L7/L12 stalk, and near the tRNA binding site of the peptidyltransferase center. This is Large ribosomal subunit protein uL6 from Flavobacterium johnsoniae (strain ATCC 17061 / DSM 2064 / JCM 8514 / BCRC 14874 / CCUG 350202 / NBRC 14942 / NCIMB 11054 / UW101) (Cytophaga johnsonae).